The chain runs to 509 residues: Photosystem II CP47 reaction center protein (509 aa).

6 consecutive transmembrane segments (helical) span residues Ala21–Ser36, Ile101–Trp115, Gly140–Phe156, Ile203–Thr218, Val237–Thr252, and Asn457–Arg472.

It belongs to the PsbB/PsbC family. PsbB subfamily. PSII is composed of 1 copy each of membrane proteins PsbA, PsbB, PsbC, PsbD, PsbE, PsbF, PsbH, PsbI, PsbJ, PsbK, PsbL, PsbM, PsbT, PsbX, PsbY, PsbZ, Psb30/Ycf12, at least 3 peripheral proteins of the oxygen-evolving complex and a large number of cofactors. It forms dimeric complexes. Binds multiple chlorophylls. PSII binds additional chlorophylls, carotenoids and specific lipids. is required as a cofactor.

It localises to the plastid. The protein localises to the chloroplast thylakoid membrane. Functionally, one of the components of the core complex of photosystem II (PSII). It binds chlorophyll and helps catalyze the primary light-induced photochemical processes of PSII. PSII is a light-driven water:plastoquinone oxidoreductase, using light energy to abstract electrons from H(2)O, generating O(2) and a proton gradient subsequently used for ATP formation. This chain is Photosystem II CP47 reaction center protein, found in Trieres chinensis (Marine centric diatom).